A 362-amino-acid polypeptide reads, in one-letter code: Phosphoserine aminotransferase (362 aa).

Positions 9 and 42 each coordinate L-glutamate. Residues 76-77 (GR), Trp102, Thr153, Asp174, and Gln197 each bind pyridoxal 5'-phosphate. Lys198 carries the N6-(pyridoxal phosphate)lysine modification. Residue 239–240 (NT) coordinates pyridoxal 5'-phosphate.

Belongs to the class-V pyridoxal-phosphate-dependent aminotransferase family. SerC subfamily. In terms of assembly, homodimer. Pyridoxal 5'-phosphate is required as a cofactor.

The protein resides in the cytoplasm. The catalysed reaction is O-phospho-L-serine + 2-oxoglutarate = 3-phosphooxypyruvate + L-glutamate. It catalyses the reaction 4-(phosphooxy)-L-threonine + 2-oxoglutarate = (R)-3-hydroxy-2-oxo-4-phosphooxybutanoate + L-glutamate. It functions in the pathway amino-acid biosynthesis; L-serine biosynthesis; L-serine from 3-phospho-D-glycerate: step 2/3. The protein operates within cofactor biosynthesis; pyridoxine 5'-phosphate biosynthesis; pyridoxine 5'-phosphate from D-erythrose 4-phosphate: step 3/5. Catalyzes the reversible conversion of 3-phosphohydroxypyruvate to phosphoserine and of 3-hydroxy-2-oxo-4-phosphonooxybutanoate to phosphohydroxythreonine. This Escherichia coli O157:H7 protein is Phosphoserine aminotransferase.